The sequence spans 332 residues: MPNKVYDVTIIGGGPIGLFSAFYSGLRSMKTKIIDAEPAVGGKVRYFFPEKIIRDIGGIPAITGENLVANLKQQAETFHPTIVCSERVVDVTKLSDGTFQLTSHNGSIHFSKTIVIATGSGTFEVNKLEALHAEDFPFAIHYDVKNIEQFRDKVVVVSGGGNSAIDWAQTLEPIAKQVHLIYRGEDFKAHEESVRELQNSRVEIHIHHEINELIGTNNQLTKINVCCNKTQATKTIQTDALFINHGVKVDLGTMAEWGFEQADFGIVVDDEMKTTVPGIFACGDSATYPRKIRIIAAGLHEGPIAINSAKKYLEPTAADEAMISTHHESFIG.

Positions 35, 43, 48, 88, 123, 284, and 325 each coordinate FAD.

The protein belongs to the ferredoxin--NADP reductase type 2 family. In terms of assembly, homodimer. It depends on FAD as a cofactor.

The enzyme catalyses 2 reduced [2Fe-2S]-[ferredoxin] + NADP(+) + H(+) = 2 oxidized [2Fe-2S]-[ferredoxin] + NADPH. This chain is Ferredoxin--NADP reductase 1, found in Listeria monocytogenes serotype 4b (strain F2365).